A 341-amino-acid polypeptide reads, in one-letter code: Phenylalanine--tRNA ligase alpha subunit (341 aa).

E256 provides a ligand contact to Mg(2+).

This sequence belongs to the class-II aminoacyl-tRNA synthetase family. Phe-tRNA synthetase alpha subunit type 1 subfamily. As to quaternary structure, tetramer of two alpha and two beta subunits. Mg(2+) is required as a cofactor.

The protein resides in the cytoplasm. It catalyses the reaction tRNA(Phe) + L-phenylalanine + ATP = L-phenylalanyl-tRNA(Phe) + AMP + diphosphate + H(+). The chain is Phenylalanine--tRNA ligase alpha subunit (pheS) from Chlamydia muridarum (strain MoPn / Nigg).